A 554-amino-acid polypeptide reads, in one-letter code: MNPSTTQARVVVDELIRGGVRDVVLCPGSRNAPLAFALQDADRSGRIRLHVRIDERTAGYLAIGLAIGAGAPVCVAMTSGTAVANLGPAVVEANYARVPLIVLSANRPYELLGTGANQTMEQLGYFGTQVRASISLGLAEDAPERTSALNATWRSATCRVLAAATGARTANAGPVHFDIPLREPLVPDPEPLGAVTPPGRPAGKPWTYTPPVTFDQPLDIDLSVDTVVISGHGAGVHPNLAALPTVAEPTAPRSGDNPLHPLALPLLRPQQVIMLGRPTLHRPVSVLLADAEVPVFALTTGPRWPDVSGNSQATGTRAVTTGAPRPAWLDRCAAMNRHAIAAVREQLAAHPLTTGLHVAAAVSHALRPGDQLVLGASNPVRDVALAGLDTRGIRVRSNRGVAGIDGTVSTAIGAALAYEGAHERTGSPDSPPRTIALIGDLTFVHDSSGLLIGPTEPIPRSLTIVVSNDNGGGIFELLEQGDPRFSDVSSRIFGTPHDVDVGALCRAYHVESRQIEVDELGPTLDQPGAGMRVLEVKADRSSLRQLHAAIKAAL.

Belongs to the TPP enzyme family. MenD subfamily. In terms of assembly, homodimer. Requires Mg(2+) as cofactor. Mn(2+) is required as a cofactor. It depends on thiamine diphosphate as a cofactor.

It carries out the reaction isochorismate + 2-oxoglutarate + H(+) = 5-enolpyruvoyl-6-hydroxy-2-succinyl-cyclohex-3-ene-1-carboxylate + CO2. The protein operates within quinol/quinone metabolism; 1,4-dihydroxy-2-naphthoate biosynthesis; 1,4-dihydroxy-2-naphthoate from chorismate: step 2/7. Its pathway is quinol/quinone metabolism; menaquinone biosynthesis. In terms of biological role, catalyzes the thiamine diphosphate-dependent decarboxylation of 2-oxoglutarate and the subsequent addition of the resulting succinic semialdehyde-thiamine pyrophosphate anion to isochorismate to yield 2-succinyl-5-enolpyruvyl-6-hydroxy-3-cyclohexene-1-carboxylate (SEPHCHC). This is 2-succinyl-5-enolpyruvyl-6-hydroxy-3-cyclohexene-1-carboxylate synthase from Mycobacterium tuberculosis (strain ATCC 25177 / H37Ra).